We begin with the raw amino-acid sequence, 160 residues long: Phosphopantetheine adenylyltransferase (160 aa).

Ser-10 contributes to the substrate binding site. ATP-binding positions include 10-11 (SF) and His-18. Substrate contacts are provided by Lys-42, Thr-74, and Arg-88. ATP is bound by residues 89 to 91 (GLR), Glu-99, and 124 to 130 (YSFISST).

It belongs to the bacterial CoaD family. In terms of assembly, homohexamer. The cofactor is Mg(2+).

It is found in the cytoplasm. The catalysed reaction is (R)-4'-phosphopantetheine + ATP + H(+) = 3'-dephospho-CoA + diphosphate. Its pathway is cofactor biosynthesis; coenzyme A biosynthesis; CoA from (R)-pantothenate: step 4/5. Functionally, reversibly transfers an adenylyl group from ATP to 4'-phosphopantetheine, yielding dephospho-CoA (dPCoA) and pyrophosphate. The sequence is that of Phosphopantetheine adenylyltransferase from Leptospira interrogans serogroup Icterohaemorrhagiae serovar copenhageni (strain Fiocruz L1-130).